The sequence spans 279 residues: Lactose operon transcription activator (279 aa).

The HTH araC/xylS-type domain maps to 174-272 (QHAVDFINTN…EISASEYRHH (99 aa)). DNA-binding regions (H-T-H motif) lie at residues 191–212 (EDVAKSVNITRSHLYKLFKKNL) and 239–262 (ISDISRQVGYKDPLLFSKNFTKHF).

In terms of biological role, transcriptional regulator of the lacPH genes for lactose utilization. The polypeptide is Lactose operon transcription activator (lacR) (Staphylococcus xylosus).